Consider the following 631-residue polypeptide: Pescadillo homolog (631 aa).

Residues 321–414 form the BRCT domain; that stretch reads RLRTLFKGLK…QLLPTNDYFL (94 aa). Residues 428–442 show a composition bias toward basic and acidic residues; sequence SKRDSYIPPEEKALH. 3 disordered regions span residues 428–471, 489–561, and 602–631; these read SKRD…EADQ, YKKY…VDEH, and ADNK…KLVK. 2 positions are modified to phosphoserine: Ser-453 and Ser-457. 2 stretches are compositionally biased toward acidic residues: residues 453 to 471 and 498 to 525; these read SEEE…EADQ and VNED…EDVD. A compositionally biased stretch (basic and acidic residues) spans 526 to 538; it reads EQTKRKQQEKEKM. The segment covering 544–553 has biased composition (basic residues); that stretch reads KVHKVNKRQV. The stretch at 591-631 forms a coiled coil; the sequence is WLLRKKRRNIDADNKEAKKAAKREARKQAAEAAARAAKLVK. Basic and acidic residues predominate over residues 602–619; that stretch reads ADNKEAKKAAKREARKQA. Residues 620–631 are compositionally biased toward low complexity; it reads AEAAARAAKLVK.

This sequence belongs to the pescadillo family.

The protein resides in the nucleus. It is found in the nucleolus. The protein localises to the nucleoplasm. Functionally, required for maturation of ribosomal RNAs and formation of the large ribosomal subunit. The polypeptide is Pescadillo homolog (Drosophila pseudoobscura pseudoobscura (Fruit fly)).